The chain runs to 226 residues: UPF0758 protein SGO_1229 (226 aa).

One can recognise an MPN domain in the interval 103–225 (RILSSQKLAK…YYSYREETDL (123 aa)). Zn(2+) contacts are provided by His-174, His-176, and Asp-187. The short motif at 174 to 187 (HNHPSGATRPSRDD) is the JAMM motif element.

It belongs to the UPF0758 family.

In Streptococcus gordonii (strain Challis / ATCC 35105 / BCRC 15272 / CH1 / DL1 / V288), this protein is UPF0758 protein SGO_1229.